A 203-amino-acid chain; its full sequence is Kunitz trypsin inhibitor 6 (203 aa).

A signal peptide spans 1-21 (MKTFQLMMISFLFVAITTTSG). A disulfide bridge links cysteine 70 with cysteine 115. N-linked (GlcNAc...) asparagine glycans are attached at residues asparagine 94, asparagine 127, asparagine 136, asparagine 144, and asparagine 197.

The protein belongs to the protease inhibitor I3 (leguminous Kunitz-type inhibitor) family.

Its function is as follows. Exhibits Kunitz trypsin protease inhibitor activity. This chain is Kunitz trypsin inhibitor 6, found in Arabidopsis thaliana (Mouse-ear cress).